A 1388-amino-acid chain; its full sequence is Rho-associated protein kinase 2 (1388 aa).

Positions Met-1–Ala-24 are disordered. In terms of domain architecture, Protein kinase spans Tyr-92–Phe-354. Residues Ile-98–Val-106 and Lys-121 each bind ATP. Asp-214 (proton acceptor) is an active-site residue. Positions Asp-357–Ser-425 constitute an AGC-kinase C-terminal domain. The segment at Asn-363 to Val-784 is interaction with PPP1R12A. Positions Pro-373–Leu-420 are interaction with NPM1. Thr-414 is subject to Phosphothreonine; by ROCK2. One can recognise an REM-1 domain in the interval Ala-497 to Thr-573. A compositionally biased stretch (basic and acidic residues) spans Asn-512–Glu-530. Residues Asn-512–Asp-532 are disordered. Position 722 is a phosphotyrosine; by SRC (Tyr-722). Positions Thr-979–Pro-1047 constitute a RhoBD domain. Residues Thr-979–Pro-1047 form an RHOA binding region. Residues Thr-1054–Leu-1126 are a coiled coil. Ser-1137 is subject to Phosphoserine. The region spanning Glu-1150–Pro-1349 is the PH domain. Position 1212 is a phosphothreonine (Thr-1212). The Phorbol-ester/DAG-type zinc finger occupies Gly-1260–Cys-1315. A disordered region spans residues Val-1345 to Ser-1388. A phosphoserine mark is found at Ser-1362 and Ser-1374. The span at Ser-1362 to Arg-1376 shows a compositional bias: polar residues.

The protein belongs to the protein kinase superfamily. AGC Ser/Thr protein kinase family. In terms of assembly, homodimer. Interacts with IRS1. Interacts with RAF1. Interacts with RHOA (activated by GTP), RHOB and RHOC. Interacts with PPP1R12A. Interacts with EP300. Interacts with CHORDC1. Interacts with BRCA2. Interacts with NPM1; this interaction enhances ROCK2 activity. Interacts with SORL1. Interacts with PJVK. Mg(2+) serves as cofactor. In terms of processing, autophosphorylated. Phosphorylation at Tyr-722 reduces its binding to RHOA and is crucial for focal adhesion dynamics. Dephosphorylation by PTPN11 stimulates its RHOA binding activity. Post-translationally, cleaved by granzyme B during apoptosis. This leads to constitutive activation of the kinase and membrane blebbing.

It is found in the cytoplasm. It localises to the cell membrane. The protein localises to the nucleus. Its subcellular location is the cytoskeleton. The protein resides in the microtubule organizing center. It is found in the centrosome. It carries out the reaction L-seryl-[protein] + ATP = O-phospho-L-seryl-[protein] + ADP + H(+). It catalyses the reaction L-threonyl-[protein] + ATP = O-phospho-L-threonyl-[protein] + ADP + H(+). Its activity is regulated as follows. Activated by RHOA binding. Inhibited by Y-27632. In terms of biological role, protein kinase which is a key regulator of actin cytoskeleton and cell polarity. Involved in regulation of smooth muscle contraction, actin cytoskeleton organization, stress fiber and focal adhesion formation, neurite retraction, cell adhesion and motility via phosphorylation of ADD1, BRCA2, CNN1, EZR, DPYSL2, EP300, MSN, MYL9/MLC2, NPM1, RDX, PPP1R12A and VIM. Phosphorylates SORL1 and IRF4. Acts as a negative regulator of VEGF-induced angiogenic endothelial cell activation. Positively regulates the activation of p42/MAPK1-p44/MAPK3 and of p90RSK/RPS6KA1 during myogenic differentiation. Plays an important role in the timely initiation of centrosome duplication. Inhibits keratinocyte terminal differentiation. May regulate closure of the eyelids and ventral body wall through organization of actomyosin bundles. Plays a critical role in the regulation of spine and synaptic properties in the hippocampus. Plays an important role in generating the circadian rhythm of the aortic myofilament Ca(2+) sensitivity and vascular contractility by modulating the myosin light chain phosphorylation. This Sus scrofa (Pig) protein is Rho-associated protein kinase 2 (ROCK2).